Reading from the N-terminus, the 611-residue chain is POU domain, class 6, transcription factor 1 (611 aa).

The tract at residues 62–93 is disordered; it reads ASQAAGEAGPDNLGSSAEATVKSPPGIPPSPA. The region spanning 449-523 is the POU-specific domain; the sequence is EDGINLEEIR…VLEKWLNEAE (75 aa). A DNA-binding region (homeobox) is located at residues 544-603; sequence KRKRRTSFTPQAIEALNAYFEKNPLPTGQEITEIAKELNYDREVVRVWFCNRRQTLKNTS.

This sequence belongs to the POU transcription factor family. Class-6 subfamily. In the embryo, expressed exclusively in the developing brain, whereas in the adult its expression is restricted to brain, heart, skeletal muscle and lung. In the brain, the highest expression levels are found in specific cell layers of the cortex, the olfactory bulb, the hippocampus and the cerebellum.

Its subcellular location is the nucleus. Transcription factor that binds preferentially to a variant of the octamer motif (5'-ATGATAAT-3'). The sequence is that of POU domain, class 6, transcription factor 1 (POU6F1) from Homo sapiens (Human).